The chain runs to 413 residues: DNA primase DnaG (413 aa).

Positions 168–246 (PNLIIVEGRA…KIDYVARAPV (79 aa)) constitute a Toprim domain. Glu174, Asp219, and Asp221 together coordinate Mg(2+).

Belongs to the archaeal DnaG primase family. In terms of assembly, forms a ternary complex with MCM helicase and DNA. Component of the archaeal exosome complex. Mg(2+) serves as cofactor.

It catalyses the reaction ssDNA + n NTP = ssDNA/pppN(pN)n-1 hybrid + (n-1) diphosphate.. In terms of biological role, RNA polymerase that catalyzes the synthesis of short RNA molecules used as primers for DNA polymerase during DNA replication. Also part of the exosome, which is a complex involved in RNA degradation. Acts as a poly(A)-binding protein that enhances the interaction between heteromeric, adenine-rich transcripts and the exosome. The chain is DNA primase DnaG from Metallosphaera sedula (strain ATCC 51363 / DSM 5348 / JCM 9185 / NBRC 15509 / TH2).